A 506-amino-acid chain; its full sequence is Anaerobic nitric oxide reductase transcription regulator NorR (506 aa).

Residue Asp57 is modified to 4-aspartylphosphate. The region spanning 187–416 (MIGLSPAMTQ…LEHAIHRAVV (230 aa)) is the Sigma-54 factor interaction domain. ATP contacts are provided by residues 215–222 (GETGTGKE) and 278–287 (ADNGTLFLDE). The H-T-H motif DNA-binding region spans 481-500 (WAASARALETDVANLHRLAK).

The protein operates within nitrogen metabolism; nitric oxide reduction. Required for the expression of anaerobic nitric oxide (NO) reductase, acts as a transcriptional activator for at least the norVW operon. Activation also requires sigma-54. In Salmonella heidelberg (strain SL476), this protein is Anaerobic nitric oxide reductase transcription regulator NorR.